We begin with the raw amino-acid sequence, 272 residues long: Testis-specific gene 13 protein (272 aa).

The chain is Testis-specific gene 13 protein (TSGA13) from Bos taurus (Bovine).